The following is a 499-amino-acid chain: Lysine--tRNA ligase (499 aa).

Residues Glu408 and Glu415 each contribute to the Mg(2+) site.

This sequence belongs to the class-II aminoacyl-tRNA synthetase family. In terms of assembly, homodimer. Requires Mg(2+) as cofactor.

It localises to the cytoplasm. The catalysed reaction is tRNA(Lys) + L-lysine + ATP = L-lysyl-tRNA(Lys) + AMP + diphosphate. This is Lysine--tRNA ligase from Bacillus cereus (strain G9842).